Here is a 286-residue protein sequence, read N- to C-terminus: MPIKIENLTYTYMPGTPFEKKALDNVNITIEDGEFAVFIGHTGSGKSTLIQQINGLLKPTSGSIFIDDVDITDKSVKLNDIRKKVGLVFQYPEYQLFEETIEKDIAFGPRNMGLSEEEVSTRVKKAMKMVGLEYNDFKDKSPFELSGGQKRRVAIAGVVAMEPKVLILDEPTAGLDPKGRDDILYEIKKLQKEYKMTIILVSHSMEDVAKVADKIFVMYDSRCILSGNLDEVFNEIDTLEKVGLAVPKVTYLVRKLREKGFDISKDIFTIEAAKKEILRVLESAKR.

The region spanning Ile-3–Ala-245 is the ABC transporter domain. Gly-40–Ser-47 lines the ATP pocket.

The protein belongs to the ABC transporter superfamily. Energy-coupling factor EcfA family. Forms a stable energy-coupling factor (ECF) transporter complex composed of 2 membrane-embedded substrate-binding proteins (S component), 2 ATP-binding proteins (A component) and 2 transmembrane proteins (T component).

Its subcellular location is the cell membrane. ATP-binding (A) component of a common energy-coupling factor (ECF) ABC-transporter complex. Unlike classic ABC transporters this ECF transporter provides the energy necessary to transport a number of different substrates. This is Energy-coupling factor transporter ATP-binding protein EcfA2 from Clostridium acetobutylicum (strain ATCC 824 / DSM 792 / JCM 1419 / IAM 19013 / LMG 5710 / NBRC 13948 / NRRL B-527 / VKM B-1787 / 2291 / W).